The following is a 603-amino-acid chain: Granule-bound starch synthase 1, chloroplastic/amyloplastic (603 aa).

The N-terminal 75 residues, 1–75 (MATITGSSMP…SEKSLGKIVC (75 aa)), are a transit peptide targeting the chloroplast. ADP-alpha-D-glucose is bound at residue Lys-91.

Belongs to the glycosyltransferase 1 family. Bacterial/plant glycogen synthase subfamily. As to expression, expressed in pods and leaves. No expression in flowers or stipules.

The protein localises to the plastid. Its subcellular location is the chloroplast. It is found in the amyloplast. The enzyme catalyses an NDP-alpha-D-glucose + [(1-&gt;4)-alpha-D-glucosyl](n) = [(1-&gt;4)-alpha-D-glucosyl](n+1) + a ribonucleoside 5'-diphosphate + H(+). Its pathway is glycan biosynthesis; starch biosynthesis. Functionally, may be responsible for the synthesis of amylose. The chain is Granule-bound starch synthase 1, chloroplastic/amyloplastic from Pisum sativum (Garden pea).